Reading from the N-terminus, the 492-residue chain is Cell death protein 6 (492 aa).

Over residues 19–29 the composition is skewed to low complexity; it reads GNNINGEGSSS. The segment at 19 to 38 is disordered; that stretch reads GNNINGEGSSSPSTSAPQVK. Positions 55–215 constitute a PID domain; the sequence is INGHVEYVAR…YILKKKIVEL (161 aa). 2 disordered regions span residues 241–385 and 464–492; these read TGPP…STAA and TGDL…NLKQ. The segment covering 244–268 has biased composition (pro residues); sequence PIYPGLGPPALPLSPMPQGPPPNIP. Over residues 300 to 312 the composition is skewed to low complexity; that stretch reads ASPSVSPASTSPS. A compositionally biased stretch (pro residues) spans 313–333; that stretch reads GPAPSIPPPRPPALAPPPPVA. Residues 373–383 are compositionally biased toward basic and acidic residues; that stretch reads FDPRAGEKKST.

The protein belongs to the ced-6 family. Homodimer. Interacts with ced-1. Interacts with E3 ubiquitin-protein ligase trim-21. In terms of tissue distribution, detected in gonadal sheath cells.

It localises to the cytoplasm. May function as an adapter protein in a pathway that mediates recognition and phagocytosis of apoptotic cells during normal development. Promotes engulfment of cells at both early and late stages of apoptosis. Required for actin reorganization around apoptotic cells. Plays a role in protecting dopaminergic neurons from oxidative stress-induced degeneration. Mediates recruitment of E3 ubiquitin-protein ligase trim-21 to the apoptotic cell surface which promotes ubiquitination and degradation of ced-1. The protein is Cell death protein 6 of Caenorhabditis elegans.